Here is a 360-residue protein sequence, read N- to C-terminus: NAD(P)H-quinone oxidoreductase subunit 1, chloroplastic (360 aa).

Helical transmembrane passes span 27-47 (IWIFVPIFSLVLGIITGVLVI), 98-118 (FSIGPSIAVISILLSYSVIPF), 129-149 (IGIFLWIAISSIAPIGLLMSG), 165-185 (AAQSISYEIPLTLCVLSISLL), 203-223 (FWGWNLWRQPIGFIIFLISSL), 248-268 (YSGIKFGLFYVASYLNLLISS), 269-289 (LFVTVLYLGGWNISIPYISIL), 297-317 (IFGTTIGIFITLAKTYLFLFI), and 340-360 (FLLPISLGNLLLTTSFQLFSL).

Belongs to the complex I subunit 1 family. NDH is composed of at least 16 different subunits, 5 of which are encoded in the nucleus.

The protein localises to the plastid. It is found in the chloroplast thylakoid membrane. It catalyses the reaction a plastoquinone + NADH + (n+1) H(+)(in) = a plastoquinol + NAD(+) + n H(+)(out). It carries out the reaction a plastoquinone + NADPH + (n+1) H(+)(in) = a plastoquinol + NADP(+) + n H(+)(out). NDH shuttles electrons from NAD(P)H:plastoquinone, via FMN and iron-sulfur (Fe-S) centers, to quinones in the photosynthetic chain and possibly in a chloroplast respiratory chain. The immediate electron acceptor for the enzyme in this species is believed to be plastoquinone. Couples the redox reaction to proton translocation, and thus conserves the redox energy in a proton gradient. The protein is NAD(P)H-quinone oxidoreductase subunit 1, chloroplastic of Lepidium virginicum (Virginia pepperweed).